We begin with the raw amino-acid sequence, 384 residues long: G protein-coupled receptor 88 (384 aa).

The Extracellular portion of the chain corresponds to 1–35; the sequence is MTNSSSTSTSTTTGGSLLLLCEEEESWAGRRIPVS. N-linked (GlcNAc...) asparagine glycosylation is present at asparagine 3. The helical transmembrane segment at 36 to 56 threads the bilayer; it reads LLYSGLAIGGTLANGMVIYLV. The Cytoplasmic portion of the chain corresponds to 57-73; the sequence is SSFRKLQTTSNAFIVNG. Residues 74-94 form a helical membrane-spanning segment; it reads CAADLSVCALWMPQEAVLGLL. Residues 95 to 116 are Extracellular-facing; sequence PSGSAEPPGDWDGGGGSYRLLR. Residues 117–136 form a helical membrane-spanning segment; that stretch reads GGLLGLGLTVSLLSHCLVAL. Topologically, residues 137–158 are cytoplasmic; it reads NRYLLITRAPATYQVLYQRRHT. The helical transmembrane segment at 159 to 179 threads the bilayer; that stretch reads VGMLALSWALALGLVLLLPPW. Residues 180-195 lie on the Extracellular side of the membrane; it reads APKPGAEPPQVHYPAL. Residues 196-216 form a helical membrane-spanning segment; it reads LAAGALLAQTALLLHCYLGIV. The Cytoplasmic portion of the chain corresponds to 217–285; the sequence is RRVRVSVKRV…RAQRRLSGLS (69 aa). Residues 286–306 traverse the membrane as a helical segment; sequence VLLLCCVFLLATQPLVWVSLA. Residues 307 to 310 lie on the Extracellular side of the membrane; the sequence is SGFS. A helical membrane pass occupies residues 311 to 331; that stretch reads LPVPWGVQAASWLLCCALSAL. Residues 332–384 are Cytoplasmic-facing; it reads NPLLYTWRNEEFRRSVRSVLPGVGDAAAAAAAATAVPAMSQAQLGTRAAGQHW.

The protein belongs to the G-protein coupled receptor 1 family. In terms of tissue distribution, expressed predominantly in the striatum.

It localises to the cell membrane. The protein resides in the cell projection. The protein localises to the cilium membrane. Its subcellular location is the cytoplasm. It is found in the nucleus. Its function is as follows. Orphan G protein-coupled receptor implicated in a large repertoire of behavioral responses that engage motor activities, spatial learning, and emotional processing. May play a role in the regulation of cognitive and motor function. Couples with the heterotrimeric G protein complex of the G(i) subfamily, consisting of GNAI1, GNB1 and GNG2, thereby acting through a G(i)-mediated pathway. Plays a role in the attenuation of D1 dopamine receptor (D1R)-mediated cAMP response in ciliated cells. In on-ciliated cells, involved in the inhibition of the beta-2 adrenergic receptor (B2AR) response. The protein is G protein-coupled receptor 88 (Gpr88) of Mus musculus (Mouse).